The following is a 97-amino-acid chain: Putative pterin-4-alpha-carbinolamine dehydratase (97 aa).

The protein belongs to the pterin-4-alpha-carbinolamine dehydratase family.

The catalysed reaction is (4aS,6R)-4a-hydroxy-L-erythro-5,6,7,8-tetrahydrobiopterin = (6R)-L-erythro-6,7-dihydrobiopterin + H2O. The sequence is that of Putative pterin-4-alpha-carbinolamine dehydratase from Phenylobacterium zucineum (strain HLK1).